A 459-amino-acid polypeptide reads, in one-letter code: Phosphoglucosamine mutase (459 aa).

S105 serves as the catalytic Phosphoserine intermediate. Mg(2+) contacts are provided by S105, D252, D254, and D256. S105 is modified (phosphoserine).

This sequence belongs to the phosphohexose mutase family. It depends on Mg(2+) as a cofactor. Activated by phosphorylation.

It carries out the reaction alpha-D-glucosamine 1-phosphate = D-glucosamine 6-phosphate. In terms of biological role, catalyzes the conversion of glucosamine-6-phosphate to glucosamine-1-phosphate. This chain is Phosphoglucosamine mutase, found in Bifidobacterium adolescentis (strain ATCC 15703 / DSM 20083 / NCTC 11814 / E194a).